The primary structure comprises 176 residues: Nucleoside triphosphate/diphosphate phosphatase (176 aa).

Arginine 23 serves as the catalytic Proton donor. Mg(2+) is bound by residues asparagine 87, aspartate 103, aspartate 105, aspartate 107, aspartate 120, and glutamate 123.

It belongs to the Ntdp family. Mg(2+) serves as cofactor.

The catalysed reaction is a ribonucleoside 5'-triphosphate + H2O = a ribonucleoside 5'-diphosphate + phosphate + H(+). It catalyses the reaction a ribonucleoside 5'-diphosphate + H2O = a ribonucleoside 5'-phosphate + phosphate + H(+). Its function is as follows. Has nucleoside phosphatase activity towards nucleoside triphosphates and nucleoside diphosphates. This is Nucleoside triphosphate/diphosphate phosphatase from Bacillus licheniformis (strain ATCC 14580 / DSM 13 / JCM 2505 / CCUG 7422 / NBRC 12200 / NCIMB 9375 / NCTC 10341 / NRRL NRS-1264 / Gibson 46).